The chain runs to 94 residues: Evasin P1172 (94 aa).

Cystine bridges form between C35–C54, C39–C56, and C50–C67. N-linked (GlcNAc...) asparagine glycans are attached at residues N38, N44, N53, and N80.

Its subcellular location is the secreted. In terms of biological role, salivary chemokine-binding protein which binds to host chemokines CXCL1, CXCL2, CXCL5 and CXCL8. In Ixodes ricinus (Common tick), this protein is Evasin P1172.